A 516-amino-acid polypeptide reads, in one-letter code: L-amino-acid oxidase (516 aa).

Residues 1–18 (MNVFFMFSLLFLAALGSC) form the signal peptide. Cys-28 and Cys-191 are joined by a disulfide. FAD contacts are provided by residues 61-62 (MA), 81-82 (EA), Arg-89, and 105-108 (GPMR). Substrate is bound at residue Arg-108. An N-linked (GlcNAc...) (complex) asparagine glycan is attached at Asn-190. Residue His-241 coordinates substrate. Val-279 provides a ligand contact to FAD. A disulfide bridge links Cys-349 with Cys-430. A glycan (N-linked (GlcNAc...) (complex) asparagine) is linked at Asn-379. Tyr-390 provides a ligand contact to substrate. FAD is bound by residues Glu-475 and 482–487 (GWIDST). Substrate is bound at residue 482–483 (GW).

In terms of assembly, homodimer; non-covalently linked. It depends on FAD as a cofactor. N-glycosylated at Asn-190 and Asn-379 with bis-sialylated, biantennary, core-fucosylated dodecasaccharide (composed of N-acetylglucosamine, fucose, mannose, galactose, and sialic acid residues). In terms of tissue distribution, expressed by the venom gland.

It is found in the secreted. The catalysed reaction is an L-alpha-amino acid + O2 + H2O = a 2-oxocarboxylate + H2O2 + NH4(+). It catalyses the reaction L-leucine + O2 + H2O = 4-methyl-2-oxopentanoate + H2O2 + NH4(+). It carries out the reaction L-phenylalanine + O2 + H2O = 3-phenylpyruvate + H2O2 + NH4(+). The enzyme catalyses L-tryptophan + O2 + H2O = indole-3-pyruvate + H2O2 + NH4(+). The catalysed reaction is L-methionine + O2 + H2O = 4-methylsulfanyl-2-oxobutanoate + H2O2 + NH4(+). It catalyses the reaction L-isoleucine + O2 + H2O = (S)-3-methyl-2-oxopentanoate + H2O2 + NH4(+). It carries out the reaction L-arginine + O2 + H2O = 5-guanidino-2-oxopentanoate + H2O2 + NH4(+). The enzyme catalyses L-aspartate + O2 + H2O = oxaloacetate + H2O2 + NH4(+). The catalysed reaction is L-histidine + O2 + H2O = 3-(imidazol-5-yl)pyruvate + H2O2 + NH4(+). It catalyses the reaction L-2-aminohexanoate + O2 + H2O = 2-oxohexanoate + H2O2 + NH4(+). It carries out the reaction L-2-aminopentanoate + O2 + H2O = 2-oxopentanoate + H2O2 + NH4(+). Functionally, catalyzes an oxidative deamination of predominantly hydrophobic and aromatic L-amino acids, thus producing hydrogen peroxide that may contribute to the diverse toxic effects of this enzyme. Shows high affinity for L-Phe, L-Trp, L-Met, L-Leu, and L-Ile, moderate affinity for L-Arg, L-Asp, and L-His, and very low affinity for L-Gln, L-Lys, and L-Ala. Also shows high activity on L-norleucine (L-2-aminohexanoate), and L-norvaline (L-2-aminopentanoate) and a weak activity on L-ornithine and L-aminobutyric acid. Also exhibits diverse biological activities, such as hemorrhage, hemolysis, edema, apoptosis of vascular endothelial cells or tumor cell lines, and antiparasitic activities, as well as regulation of platelet aggregation. Its effect on platelets is controversial, since it either induces aggregation or inhibits agonist-induced aggregation. These different effects are probably due to different experimental conditions. A possible explanation of high efficacy it that LAAO may bind to target cells through its sialylated glycan moiety that would bind to sialic acid-binding lectins (siglec) on target cells. This interaction may result in production of locally high concentrations of hydrogen peroxide in or near the binding interface, leading, in turn to oxidative damage of the siglec or another adjacent cell structural elements. In Calloselasma rhodostoma (Malayan pit viper), this protein is L-amino-acid oxidase.